Reading from the N-terminus, the 99-residue chain is Aspartyl/glutamyl-tRNA(Asn/Gln) amidotransferase subunit C (99 aa).

Belongs to the GatC family. In terms of assembly, heterotrimer of A, B and C subunits.

The enzyme catalyses L-glutamyl-tRNA(Gln) + L-glutamine + ATP + H2O = L-glutaminyl-tRNA(Gln) + L-glutamate + ADP + phosphate + H(+). It catalyses the reaction L-aspartyl-tRNA(Asn) + L-glutamine + ATP + H2O = L-asparaginyl-tRNA(Asn) + L-glutamate + ADP + phosphate + 2 H(+). Its function is as follows. Allows the formation of correctly charged Asn-tRNA(Asn) or Gln-tRNA(Gln) through the transamidation of misacylated Asp-tRNA(Asn) or Glu-tRNA(Gln) in organisms which lack either or both of asparaginyl-tRNA or glutaminyl-tRNA synthetases. The reaction takes place in the presence of glutamine and ATP through an activated phospho-Asp-tRNA(Asn) or phospho-Glu-tRNA(Gln). The chain is Aspartyl/glutamyl-tRNA(Asn/Gln) amidotransferase subunit C from Methylibium petroleiphilum (strain ATCC BAA-1232 / LMG 22953 / PM1).